The following is a 275-amino-acid chain: NH(3)-dependent NAD(+) synthetase (275 aa).

46-53 (GISGGQDS) contacts ATP. D52 contributes to the Mg(2+) binding site. R140 is a deamido-NAD(+) binding site. An ATP-binding site is contributed by T160. Mg(2+) is bound at residue E165. Residues K173 and D180 each coordinate deamido-NAD(+). ATP contacts are provided by K189 and T211. Residue 260 to 261 (HK) participates in deamido-NAD(+) binding.

Belongs to the NAD synthetase family. As to quaternary structure, homodimer.

The enzyme catalyses deamido-NAD(+) + NH4(+) + ATP = AMP + diphosphate + NAD(+) + H(+). The protein operates within cofactor biosynthesis; NAD(+) biosynthesis; NAD(+) from deamido-NAD(+) (ammonia route): step 1/1. Its function is as follows. Catalyzes the ATP-dependent amidation of deamido-NAD to form NAD. Uses ammonia as a nitrogen source. This chain is NH(3)-dependent NAD(+) synthetase, found in Salmonella choleraesuis (strain SC-B67).